The following is a 497-amino-acid chain: Glutamyl-tRNA(Gln) amidotransferase subunit A (497 aa).

Active-site charge relay system residues include Lys-80 and Ser-155. Ser-179 (acyl-ester intermediate) is an active-site residue.

It belongs to the amidase family. GatA subfamily. As to quaternary structure, heterotrimer of A, B and C subunits.

The enzyme catalyses L-glutamyl-tRNA(Gln) + L-glutamine + ATP + H2O = L-glutaminyl-tRNA(Gln) + L-glutamate + ADP + phosphate + H(+). Its function is as follows. Allows the formation of correctly charged Gln-tRNA(Gln) through the transamidation of misacylated Glu-tRNA(Gln) in organisms which lack glutaminyl-tRNA synthetase. The reaction takes place in the presence of glutamine and ATP through an activated gamma-phospho-Glu-tRNA(Gln). The protein is Glutamyl-tRNA(Gln) amidotransferase subunit A (gatA) of Streptomyces coelicolor (strain ATCC BAA-471 / A3(2) / M145).